Reading from the N-terminus, the 280-residue chain is Cyanocobalamin reductase / alkylcobalamin dealkylase (280 aa).

Substrate contacts are provided by residues aspartate 104, 115-118 (ILAQ), 129-131 (YYQ), cysteine 149, and isoleucine 160. Serine 245, serine 247, serine 273, and serine 277 each carry phosphoserine. The interval 256 to 280 (LSKKPQNPRRGWLSPTVSPPISPGP) is disordered.

This sequence belongs to the MMACHC family. In terms of assembly, monomer in the absence of bound substrate. Homodimer; dimerization is triggered by binding to FMN or adenosylcobalamin. Interacts with LMBRD1 and ABCD4; the interaction ensures the transport of cobalamin from the lysosome to the cytoplasm. Forms a multiprotein complex with MMADHC, MTR and MTRR; the interaction with MTR could modulate MMACHC-dependent processing of cobalamin. Heterodimer with MMADHC; the interaction might play a role in the regulation of the balance between AdoCbl and MeCbl synthesis. It depends on FAD as a cofactor. FMN serves as cofactor.

The protein localises to the cytoplasm. It localises to the cytosol. It catalyses the reaction 2 cob(II)alamin-[cyanocobalamin reductase] + 2 hydrogen cyanide + NADP(+) = 2 cyanocob(III)alamin + 2 apo-[cyanocobalamin reductase] + NADPH + H(+). It carries out the reaction apo-[alkylcobalamin reductase] + an R-cob(III)alamin + glutathione = cob(I)alamin-[alkylcobalamin reductase] + an S-substituted glutathione + H(+). The catalysed reaction is apo-[alkylcobalamin reductase] + methylcob(III)alamin + glutathione = S-methyl glutathione + cob(I)alamin-[alkylcobalamin reductase] + H(+). The enzyme catalyses apo-[alkylcobalamin reductase] + adenosylcob(III)alamin + glutathione = S-adenosylglutathione + cob(I)alamin-[alkylcobalamin reductase] + H(+). Cobalamin (vitamin B12) cytosolic chaperone that catalyzes the reductive decyanation of cyanocob(III)alamin (cyanocobalamin, CNCbl) to yield cob(II)alamin and cyanide, using FAD or FMN as cofactors and NADPH as cosubstrate. Cyanocobalamin constitutes the inactive form of vitamin B12 introduced from the diet, and is converted into the active cofactors methylcobalamin (MeCbl) involved in methionine biosynthesis, and 5'-deoxyadenosylcobalamin (AdoCbl) involved in the TCA cycle. Forms a complex with the lysosomal transporter ABCD4 and its chaperone LMBRD1, to transport cobalamin across the lysosomal membrane into the cytosol. The processing of cobalamin in the cytosol occurs in a multiprotein complex composed of at least MMACHC, MMADHC, MTRR (methionine synthase reductase) and MTR (methionine synthase) which may contribute to shuttle safely and efficiently cobalamin towards MTR in order to produce methionine. Also acts as a glutathione transferase by catalyzing the dealkylation of the alkylcob(III)alamins MeCbl and AdoCbl, using the thiolate of glutathione for nucleophilic displacement to generate cob(I)alamin and the corresponding glutathione thioether. The conversion of incoming MeCbl or AdoCbl into a common intermediate cob(I)alamin is necessary to meet the cellular needs for both cofactors. Cysteine and homocysteine cannot substitute for glutathione in this reaction. In Bos taurus (Bovine), this protein is Cyanocobalamin reductase / alkylcobalamin dealkylase (MMACHC).